The primary structure comprises 98 residues: Leydig cell tumor 10 kDa protein homolog (98 aa).

Disordered regions lie at residues 1 to 38 and 73 to 98; these read MAQGQRKFQAQKPAKSKAAAAAASARNRGPRKGGRVIA and SLPKKLALLKASTKKKEASSSTKMPA. Over residues 16–25 the composition is skewed to low complexity; the sequence is SKAAAAAASA. Basic residues predominate over residues 28-38; the sequence is RGPRKGGRVIA. The span at 73-83 shows a compositional bias: low complexity; sequence SLPKKLALLKA.

Belongs to the UPF0390 family.

In terms of biological role, may have a potential role in hypercalcemia of malignancy. This Bos taurus (Bovine) protein is Leydig cell tumor 10 kDa protein homolog.